A 221-amino-acid chain; its full sequence is Phosphoglycolate phosphatase (221 aa).

D7 serves as the catalytic Nucleophile. Mg(2+) contacts are provided by D7 and D9. K148 provides a ligand contact to substrate. 2 residues coordinate Mg(2+): D171 and D175.

It belongs to the archaeal SPP-like hydrolase family. Requires Mg(2+) as cofactor.

The enzyme catalyses 2-phosphoglycolate + H2O = glycolate + phosphate. Functionally, catalyzes the dephosphorylation of 2-phosphoglycolate. The sequence is that of Phosphoglycolate phosphatase from Methanothermobacter thermautotrophicus (strain ATCC 29096 / DSM 1053 / JCM 10044 / NBRC 100330 / Delta H) (Methanobacterium thermoautotrophicum).